Consider the following 306-residue polypeptide: Reticulocalbin-2 (306 aa).

The first 22 residues, 1 to 22 (MESPTLLGLLLLLLGGPGTSLG), serve as a signal peptide directing secretion. EF-hand domains lie at 50–85 (EQQKRLKVIISRIDVDLDGFLTEAELSSWIQHSFKS), 86–121 (YIIEDAKQQFQHYDKDGDGRVSWEEYNIQMYDRVID), 144–173 (KKRFQKANKDGDSHLDFEEFAAFEHPEEAD), 175–210 (MKEFVIQESLEEHDKDGDGFVSLQEFLGDYRRDPAA), 226–251 (NDYDKDKDGKLSPKELLTWVMPNNEG), and 252–287 (LAQEEAVHLLDEMDLDGDRRLSANEILENQDLFLNS). Ca(2+) contacts are provided by aspartate 99, aspartate 101, aspartate 103, arginine 105, and glutamate 110. Residues aspartate 188, aspartate 190, aspartate 192, glutamate 199, aspartate 229, aspartate 231, aspartate 233, lysine 235, glutamate 240, aspartate 265, aspartate 267, aspartate 269, arginine 271, and glutamate 276 each coordinate Ca(2+).

It belongs to the CREC family. As to quaternary structure, may bind phospholipase A2, since the rat reticulocalbin-2 has been isolated on the phospholipase complex taipoxin columns. In terms of tissue distribution, expressed by the venom gland.

The protein localises to the secreted. The sequence is that of Reticulocalbin-2 from Crotalus adamanteus (Eastern diamondback rattlesnake).